Here is a 614-residue protein sequence, read N- to C-terminus: Chaperone protein DnaK (614 aa).

At Thr-174 the chain carries Phosphothreonine; by autocatalysis. The tract at residues Gln-576–Lys-614 is disordered. Residues Gly-578–Asp-589 are compositionally biased toward low complexity.

Belongs to the heat shock protein 70 family.

Its function is as follows. Acts as a chaperone. The protein is Chaperone protein DnaK of Desulfitobacterium hafniense (strain DSM 10664 / DCB-2).